We begin with the raw amino-acid sequence, 362 residues long: Poly(rC)-binding protein 2 (362 aa).

KH domains are found at residues 13–75 and 97–162; these read TLTI…FAMI and PVTL…VKQI. Lys-115 is covalently cross-linked (Glycyl lysine isopeptide (Lys-Gly) (interchain with G-Cter in SUMO2)). Ser-169 is modified (phosphoserine). A Glycyl lysine isopeptide (Lys-Gly) (interchain with G-Cter in SUMO2) cross-link involves residue Lys-181. 2 positions are modified to phosphoserine: Ser-185 and Ser-268. The region spanning 284–348 is the KH 3 domain; the sequence is TTSHELTIPN…ASISLAQYLI (65 aa). Residue Lys-319 forms a Glycyl lysine isopeptide (Lys-Gly) (interchain with G-Cter in SUMO2) linkage. Phosphoserine is present on residues Ser-361 and Ser-362.

In terms of assembly, identified in a mRNP complex, at least composed of DHX9, DDX3X, ELAVL1, HNRNPU, IGF2BP1, ILF3, PABPC1, PCBP2, PTBP2, STAU1, STAU2, SYNCRIP and YBX1. Interacts with IFIH1 and RNF135. Interacts with MAVS (via C-terminus) and ITCH (via WW domains). Interacts with CGAS; preventing the formation of liquid-like droplets in which CGAS is activated. Post-translationally, phosphorylated. The non-phosphorylated form(s) exhibited the strongest poly(rC)-binding activity.

Its subcellular location is the nucleus. The protein localises to the cytoplasm. Single-stranded nucleic acid binding protein that binds preferentially to oligo dC. Major cellular poly(rC)-binding protein. Also binds poly(rU). Acts as a negative regulator of antiviral signaling. Negatively regulates cellular antiviral responses mediated by MAVS signaling. It acts as an adapter between MAVS and the E3 ubiquitin ligase ITCH, therefore triggering MAVS ubiquitination and degradation. Negativeley regulates the cGAS-STING pathway via interaction with CGAS, preventing the formation of liquid-like droplets in which CGAS is activated. Together with PCBP1, required for erythropoiesis, possibly by regulating mRNA splicing. The chain is Poly(rC)-binding protein 2 (Pcbp2) from Mus musculus (Mouse).